The following is a 413-amino-acid chain: Gamma-glutamyl phosphate reductase (413 aa).

This sequence belongs to the gamma-glutamyl phosphate reductase family.

It localises to the cytoplasm. The enzyme catalyses L-glutamate 5-semialdehyde + phosphate + NADP(+) = L-glutamyl 5-phosphate + NADPH + H(+). The protein operates within amino-acid biosynthesis; L-proline biosynthesis; L-glutamate 5-semialdehyde from L-glutamate: step 2/2. In terms of biological role, catalyzes the NADPH-dependent reduction of L-glutamate 5-phosphate into L-glutamate 5-semialdehyde and phosphate. The product spontaneously undergoes cyclization to form 1-pyrroline-5-carboxylate. This Lactococcus lactis subsp. cremoris (strain MG1363) protein is Gamma-glutamyl phosphate reductase.